The chain runs to 363 residues: NAD(P)H-quinone oxidoreductase subunit 1, chloroplastic (363 aa).

7 helical membrane passes run 26 to 46 (IIWILIPIFTLVLGITIGVLV), 98 to 118 (FSIGPSIAVISILLSYSVIPF), 127 to 147 (LTIGVFLWIAISSIAPIGLLM), 246 to 266 (TEYSGIKFGLFYVASYLNLLV), 268 to 288 (SLFVTVLYLGGWNLSIPYIFV), 300 to 320 (VFGPVIGIFITLAKTYLFLFI), and 336 to 356 (LLNLGWKFLLPISLGNLLLTT).

It belongs to the complex I subunit 1 family. NDH is composed of at least 16 different subunits, 5 of which are encoded in the nucleus.

Its subcellular location is the plastid. The protein localises to the chloroplast thylakoid membrane. The enzyme catalyses a plastoquinone + NADH + (n+1) H(+)(in) = a plastoquinol + NAD(+) + n H(+)(out). It catalyses the reaction a plastoquinone + NADPH + (n+1) H(+)(in) = a plastoquinol + NADP(+) + n H(+)(out). Its function is as follows. NDH shuttles electrons from NAD(P)H:plastoquinone, via FMN and iron-sulfur (Fe-S) centers, to quinones in the photosynthetic chain and possibly in a chloroplast respiratory chain. The immediate electron acceptor for the enzyme in this species is believed to be plastoquinone. Couples the redox reaction to proton translocation, and thus conserves the redox energy in a proton gradient. The sequence is that of NAD(P)H-quinone oxidoreductase subunit 1, chloroplastic from Coffea arabica (Arabian coffee).